A 431-amino-acid chain; its full sequence is Tryptophan synthase beta chain 2 (431 aa).

Residue K111 is modified to N6-(pyridoxal phosphate)lysine.

The protein belongs to the TrpB family. In terms of assembly, tetramer of two alpha and two beta chains. It depends on pyridoxal 5'-phosphate as a cofactor.

The enzyme catalyses (1S,2R)-1-C-(indol-3-yl)glycerol 3-phosphate + L-serine = D-glyceraldehyde 3-phosphate + L-tryptophan + H2O. It functions in the pathway amino-acid biosynthesis; L-tryptophan biosynthesis; L-tryptophan from chorismate: step 5/5. In terms of biological role, the beta subunit is responsible for the synthesis of L-tryptophan from indole and L-serine. This chain is Tryptophan synthase beta chain 2 (trpB2), found in Sulfurisphaera tokodaii (strain DSM 16993 / JCM 10545 / NBRC 100140 / 7) (Sulfolobus tokodaii).